Here is a 228-residue protein sequence, read N- to C-terminus: Cytidylate kinase (228 aa).

Residue 7-15 (GPVATGKST) coordinates ATP.

Belongs to the cytidylate kinase family. Type 1 subfamily.

The protein resides in the cytoplasm. The enzyme catalyses CMP + ATP = CDP + ADP. The catalysed reaction is dCMP + ATP = dCDP + ADP. The protein is Cytidylate kinase of Protochlamydia amoebophila (strain UWE25).